Consider the following 494-residue polypeptide: Cobyrinate a,c-diamide synthase (494 aa).

Residues 270 to 475 (KIGVALDEAF…AHLHGVAYRE (206 aa)) enclose the GATase cobBQ-type domain. Catalysis depends on cysteine 352, which acts as the Nucleophile.

This sequence belongs to the CobB/CbiA family. Requires Mg(2+) as cofactor.

The enzyme catalyses cob(II)yrinate + 2 L-glutamine + 2 ATP + 2 H2O = cob(II)yrinate a,c diamide + 2 L-glutamate + 2 ADP + 2 phosphate + 2 H(+). The catalysed reaction is Ni-sirohydrochlorin + 2 L-glutamine + 2 ATP + 2 H2O = Ni-sirohydrochlorin a,c-diamide + 2 L-glutamate + 2 ADP + 2 phosphate + 2 H(+). It participates in cofactor biosynthesis; adenosylcobalamin biosynthesis; cob(II)yrinate a,c-diamide from sirohydrochlorin (anaerobic route): step 10/10. Catalyzes the ATP-dependent amidation of the two carboxylate groups at positions a and c of cobyrinate, using either L-glutamine or ammonia as the nitrogen source (Potential). Involved in the biosynthesis of the unique nickel-containing tetrapyrrole coenzyme F430, the prosthetic group of methyl-coenzyme M reductase (MCR), which plays a key role in methanogenesis and anaerobic methane oxidation. Catalyzes the ATP-dependent amidation of the two carboxylate groups at positions a and c of Ni-sirohydrochlorin, using L-glutamine or ammonia as the nitrogen source. Also able to use sirohydrochlorin as substrate, but only produces a monoamide species in a much slower reaction. Unable to use other metallosirohydrochlorins such as sirohaem and Co-sirohydrochlorin. This is Cobyrinate a,c-diamide synthase from Methanosarcina barkeri (strain Fusaro / DSM 804).